We begin with the raw amino-acid sequence, 206 residues long: Small ribosomal subunit protein uS4 (206 aa).

Positions 96–156 constitute an S4 RNA-binding domain; the sequence is TRLDNVVYRM…EKSRTQARIK (61 aa).

It belongs to the universal ribosomal protein uS4 family. Part of the 30S ribosomal subunit. Contacts protein S5. The interaction surface between S4 and S5 is involved in control of translational fidelity.

In terms of biological role, one of the primary rRNA binding proteins, it binds directly to 16S rRNA where it nucleates assembly of the body of the 30S subunit. With S5 and S12 plays an important role in translational accuracy. In Shewanella denitrificans (strain OS217 / ATCC BAA-1090 / DSM 15013), this protein is Small ribosomal subunit protein uS4.